The primary structure comprises 423 residues: Serpin B12 (423 aa).

The segment covering 63–72 (LSKDEHKEPN) has biased composition (basic and acidic residues). Residues 63–106 (LSKDEHKEPNDPSPQSESKASDSSLEGQKQTSASQDQQGESTND) form a disordered region. A compositionally biased stretch (polar residues) spans 75–106 (SPQSESKASDSSLEGQKQTSASQDQQGESTND).

It belongs to the serpin family. Ov-serpin subfamily. Interacts with SLFN12; as part of a pathway regulating cell differentiation.

It is found in the cytoplasm. Functionally, inhibits trypsin and plasmin, but not thrombin, coagulation factor Xa, or urokinase-type plasminogen activator. May play a role in cell differentiation. The sequence is that of Serpin B12 (Serpinb12) from Mus musculus (Mouse).